A 197-amino-acid polypeptide reads, in one-letter code: Peptidyl-tRNA hydrolase (197 aa).

Tyr18 is a tRNA binding site. His23 (proton acceptor) is an active-site residue. Residues Phe69, Asn71, and Asn117 each coordinate tRNA.

The protein belongs to the PTH family. As to quaternary structure, monomer.

The protein localises to the cytoplasm. It carries out the reaction an N-acyl-L-alpha-aminoacyl-tRNA + H2O = an N-acyl-L-amino acid + a tRNA + H(+). Its function is as follows. Hydrolyzes ribosome-free peptidyl-tRNAs (with 1 or more amino acids incorporated), which drop off the ribosome during protein synthesis, or as a result of ribosome stalling. In terms of biological role, catalyzes the release of premature peptidyl moieties from peptidyl-tRNA molecules trapped in stalled 50S ribosomal subunits, and thus maintains levels of free tRNAs and 50S ribosomes. This chain is Peptidyl-tRNA hydrolase, found in Psychromonas ingrahamii (strain DSM 17664 / CCUG 51855 / 37).